Reading from the N-terminus, the 257-residue chain is Exosome complex component mtr3 (257 aa).

It belongs to the RNase PH family. In terms of assembly, component of the RNA exosome complex. Specifically part of the catalytically inactive RNA exosome core complex (Exo-9) may associate with the catalytic subunits rrp6 and dis3 in cytoplasmic- and nuclear-specific RNA exosome complex forms. Exo-9 is formed by a hexameric base ring of RNase PH domain-containing subunits and a cap ring consisting of csl4, rrp4 and rrp40.

The protein resides in the cytoplasm. It is found in the nucleus. It localises to the nucleolus. Non-catalytic component of the RNA exosome complex which has 3'-&gt;5' exoribonuclease activity and participates in a multitude of cellular RNA processing and degradation events. In the nucleus, the RNA exosome complex is involved in proper maturation of stable RNA species such as rRNA, snRNA and snoRNA, in the elimination of RNA processing by-products and non-coding 'pervasive' transcripts, such as antisense RNA species and cryptic unstable transcripts (CUTs), and of mRNAs with processing defects, thereby limiting or excluding their export to the cytoplasm. In the cytoplasm, the RNA exosome complex is involved in general mRNA turnover and in RNA surveillance pathways, preventing translation of aberrant mRNAs. The catalytic inactive RNA exosome core complex of 9 subunits (Exo-9) is proposed to play a pivotal role in the binding and presentation of RNA for ribonucleolysis, and to serve as a scaffold for the association with catalytic subunits and accessory proteins or complexes. ski6 is part of the hexameric ring of RNase PH domain-containing subunits proposed to form a central channel which threads RNA substrates for degradation. In Schizosaccharomyces pombe (strain 972 / ATCC 24843) (Fission yeast), this protein is Exosome complex component mtr3 (mtr3).